The chain runs to 176 residues: NAD(P)H-quinone oxidoreductase subunit 6, chloroplastic (176 aa).

5 helical membrane passes run 10 to 30, 32 to 52, 61 to 81, 92 to 112, and 152 to 172; these read ILLV…VLLT, PISS…FYIP, AQLL…VMFM, LWTI…FSLI, and FYLP…GAIA.

Belongs to the complex I subunit 6 family. In terms of assembly, NDH is composed of at least 16 different subunits, 5 of which are encoded in the nucleus.

The protein localises to the plastid. It is found in the chloroplast thylakoid membrane. It catalyses the reaction a plastoquinone + NADH + (n+1) H(+)(in) = a plastoquinol + NAD(+) + n H(+)(out). The catalysed reaction is a plastoquinone + NADPH + (n+1) H(+)(in) = a plastoquinol + NADP(+) + n H(+)(out). In terms of biological role, NDH shuttles electrons from NAD(P)H:plastoquinone, via FMN and iron-sulfur (Fe-S) centers, to quinones in the photosynthetic chain and possibly in a chloroplast respiratory chain. The immediate electron acceptor for the enzyme in this species is believed to be plastoquinone. Couples the redox reaction to proton translocation, and thus conserves the redox energy in a proton gradient. This is NAD(P)H-quinone oxidoreductase subunit 6, chloroplastic (ndhG) from Chloranthus spicatus (Chulantree).